The chain runs to 1183 residues: DNA-directed RNA polymerase subunit beta (1183 aa).

It belongs to the RNA polymerase beta chain family. The RNAP catalytic core consists of 2 alpha, 1 beta, 1 beta' and 1 omega subunit. When a sigma factor is associated with the core the holoenzyme is formed, which can initiate transcription.

The catalysed reaction is RNA(n) + a ribonucleoside 5'-triphosphate = RNA(n+1) + diphosphate. DNA-dependent RNA polymerase catalyzes the transcription of DNA into RNA using the four ribonucleoside triphosphates as substrates. In Staphylococcus aureus (strain Mu3 / ATCC 700698), this protein is DNA-directed RNA polymerase subunit beta.